The chain runs to 376 residues: MAERGRKRPCGPGEHGQRIEWRKWKQQKKEEKKKWKDLKLMKKLERQRAQEEQAKRLEEEEAAAEKEDRGRPYTLSVALPGSILDNAQSPELRTYLAGQIARACAIFCVDEIVVFDEEGQDAKTVEGEFTGVGKKGQACVQLARILQYLECPQYLRKAFFPKHQDLQFAGLLNPLDSPHHMRQDEESEFREGIVVDRPTRPGHGSFVNCGMKKEVKIDKNLEPGLRVTVRLNQQQHPDCKTYHGKVVSSQDPRTKAGLYWGYTVRLASCLSAVFAEAPFQDGYDLTIGTSERGSDVASAQLPNFRHALVVFGGLQGLEAGADADPNLEVAEPSVLFDLYVNTCPGQGSRTIRTEEAILISLAALQPGLIQAGARHT.

2 disordered regions span residues 1 to 33 and 49 to 71; these read MAER…EEKK and AQEE…DRGR. The segment covering 15–33 has biased composition (basic and acidic residues); it reads HGQRIEWRKWKQQKKEEKK. Residues T289, R292, G312, N341, and T342 each coordinate S-adenosyl-L-homocysteine. Positions 292, 312, 341, and 342 each coordinate S-adenosyl-L-methionine.

It belongs to the class IV-like SAM-binding methyltransferase superfamily. As to quaternary structure, interacts with INCA1.

Its subcellular location is the cytoplasm. It is found in the cytoskeleton. The protein localises to the spindle. It localises to the chromosome. The protein resides in the centromere. Its subcellular location is the kinetochore. It is found in the microtubule organizing center. The protein localises to the centrosome. The catalysed reaction is uridine in 28S rRNA + S-adenosyl-L-methionine = N(3)-methyluridine in 28S rRNA + S-adenosyl-L-homocysteine + H(+). In terms of biological role, S-adenosyl-L-methionine-dependent methyltransferase that specifically methylates the N3 position of a uridine in 28S rRNA. Required for association of the centrosomes with the poles of the bipolar mitotic spindle during metaphase. Also involved in chromosome alignment. May promote centrosome maturation probably by recruiting A-kinase anchor protein AKAP9 to centrosomes in early mitosis. Binds specifically to miRNA MIR145 hairpin, regulates MIR145 expression at a postranscriptional level. This Homo sapiens (Human) protein is 28S rRNA (uridine-N(3))-methyltransferase.